The sequence spans 76 residues: ATP synthase subunit c (76 aa).

The next 2 membrane-spanning stretches (helical) occupy residues 8–28 (LLAAGLAMGLGAIGPGIGVGI) and 55–75 (VAFAESIAIFALVISIVLIFV).

This sequence belongs to the ATPase C chain family. In terms of assembly, F-type ATPases have 2 components, F(1) - the catalytic core - and F(0) - the membrane proton channel. F(1) has five subunits: alpha(3), beta(3), gamma(1), delta(1), epsilon(1). F(0) has three main subunits: a(1), b(2) and c(10-14). The alpha and beta chains form an alternating ring which encloses part of the gamma chain. F(1) is attached to F(0) by a central stalk formed by the gamma and epsilon chains, while a peripheral stalk is formed by the delta and b chains.

It localises to the cell membrane. Its function is as follows. F(1)F(0) ATP synthase produces ATP from ADP in the presence of a proton or sodium gradient. F-type ATPases consist of two structural domains, F(1) containing the extramembraneous catalytic core and F(0) containing the membrane proton channel, linked together by a central stalk and a peripheral stalk. During catalysis, ATP synthesis in the catalytic domain of F(1) is coupled via a rotary mechanism of the central stalk subunits to proton translocation. Functionally, key component of the F(0) channel; it plays a direct role in translocation across the membrane. A homomeric c-ring of between 10-14 subunits forms the central stalk rotor element with the F(1) delta and epsilon subunits. The polypeptide is ATP synthase subunit c (Dehalococcoides mccartyi (strain ATCC BAA-2266 / KCTC 15142 / 195) (Dehalococcoides ethenogenes (strain 195))).